A 228-amino-acid polypeptide reads, in one-letter code: Adapter protein MecA (228 aa).

The segment at 79-98 (GQKNDDSAADQTDDEGTDTQ) is disordered. The span at 85–95 (SAADQTDDEGT) shows a compositional bias: acidic residues.

Belongs to the MecA family. In terms of assembly, homodimer.

Enables the recognition and targeting of unfolded and aggregated proteins to the ClpC protease or to other proteins involved in proteolysis. In Lacticaseibacillus casei (strain BL23) (Lactobacillus casei), this protein is Adapter protein MecA.